Reading from the N-terminus, the 48-residue chain is uncharacterized protein (48 aa).

Belongs to the ELIP/psbS family.

The protein localises to the plastid. It localises to the chloroplast. In terms of biological role, possible role in chlorophyll and/or carotenoid binding. This is an uncharacterized protein from Porphyra purpurea (Red seaweed).